Here is a 124-residue protein sequence, read N- to C-terminus: MSGSSNQFTPGKLVPGAINFAEGEIVMNEGREAKVISIKNTGDRPIQVGSHFHLFETNSALVFFDEKGNEDKERKVAYGRRFDIPSGTAIRFEPGDKKEVSVIDLVGTREVWGVNGLVNGKLKK.

It belongs to the urease beta subunit family. Heterotrimer of UreA (gamma), UreB (beta) and UreC (alpha) subunits. Three heterotrimers associate to form the active enzyme.

Its subcellular location is the cytoplasm. It catalyses the reaction urea + 2 H2O + H(+) = hydrogencarbonate + 2 NH4(+). It functions in the pathway nitrogen metabolism; urea degradation; CO(2) and NH(3) from urea (urease route): step 1/1. The polypeptide is Urease subunit beta (Ureaplasma urealyticum serovar 10 (strain ATCC 33699 / Western)).